Reading from the N-terminus, the 79-residue chain is Small ribosomal subunit protein uS17 (79 aa).

Belongs to the universal ribosomal protein uS17 family. As to quaternary structure, part of the 30S ribosomal subunit.

Functionally, one of the primary rRNA binding proteins, it binds specifically to the 5'-end of 16S ribosomal RNA. The sequence is that of Small ribosomal subunit protein uS17 from Caulobacter sp. (strain K31).